A 207-amino-acid chain; its full sequence is Dephospho-CoA kinase (207 aa).

Residues 10-207 enclose the DPCK domain; it reads ILGLTGGIGS…FYLTLRGGQP (198 aa). An ATP-binding site is contributed by 18 to 23; it reads GSGKSA.

Belongs to the CoaE family.

The protein resides in the cytoplasm. The enzyme catalyses 3'-dephospho-CoA + ATP = ADP + CoA + H(+). The protein operates within cofactor biosynthesis; coenzyme A biosynthesis; CoA from (R)-pantothenate: step 5/5. In terms of biological role, catalyzes the phosphorylation of the 3'-hydroxyl group of dephosphocoenzyme A to form coenzyme A. This is Dephospho-CoA kinase from Pseudomonas putida (Arthrobacter siderocapsulatus).